Here is an 811-residue protein sequence, read N- to C-terminus: MSSILNFYRNLLSVPLSFLVKNNPIPQQPIEELSLDISQPIIYLLPYTSQTDLIIIRKNCLSVGLPDPLEENELGGQCLPRYVFLDEGRRFFKSKGAKSATIQIVEKYLELHRSLPDLNVQLVPVSVLWGRSPGHEKQVGLPKLRLLNSIQKTAVAIWFGRDTFVRFSQAVSLRYMADEYGTDASIALKLARVAKIHFAKQRMSATGPRLPNRQAMFNKLLQSPAILNAIADEAKSKRISKEKARKEAYKILDEIAANVNYEGLRVADRFLGWLWNKLYQGIDVQNAERVRKLALEGHEIVYIPCHRSHIDYLLLSYVLYHQGLVPPHIAAGINLNFWPVGMMFRRGGAFFIRRTFKGNRLYSTIFREYLAELFHRGYSVEFFIEGGRSRTGRLLAPKTGMMSMTVQALQQNQIRPISVVPVYVGYEHVLEVDTYAKELRGAAKEKENAGLVLRVIRKLRNLGQGYVNFAEPITLSNYLNQHFPEWKDSQLEEHSQWFNPAVNAISNQVMININKAAAINAMNLTGTALLSSRQRALSREQLLEQLKSYQRFLQHAPYSNDIIVPTDTPEEILTHVLNLERVGLIVEKDNFGEMLRLERSAAVLMTYYRNNIQHVFVLPSLIASIIFHHGAIQKELVSNAARKIYPFLKEELFLHFSQDELDEYVEKIIEEFTRQKLILCAENLLSINKERVRVLQLWMAGVREILQRYYITVSILQDTPNIAKATLEKESQSIAQRLSVLHGINAPEFFDKAVFSAFIGSLRSNGYFDKNGVAITEKLNDISDILDRIISTEVQLTIKSAVGKHEEVQEY.

An HXXXXD motif motif is present at residues 305–310; sequence CHRSHI.

This sequence belongs to the GPAT/DAPAT family.

It is found in the cell inner membrane. The enzyme catalyses sn-glycerol 3-phosphate + an acyl-CoA = a 1-acyl-sn-glycero-3-phosphate + CoA. Its pathway is phospholipid metabolism; CDP-diacylglycerol biosynthesis; CDP-diacylglycerol from sn-glycerol 3-phosphate: step 1/3. The polypeptide is Glycerol-3-phosphate acyltransferase (Histophilus somni (strain 129Pt) (Haemophilus somnus)).